The sequence spans 368 residues: Saccharopine dehydrogenase [NAD(+), L-lysine-forming] (368 aa).

L-saccharopine is bound by residues arginine 18 and lysine 77. Lysine 77 serves as the catalytic Proton acceptor. The residue at position 85 (serine 85) is a Phosphoserine. Histidine 96 functions as the Proton donor in the catalytic mechanism. Position 101 (glutamine 101) interacts with L-saccharopine. Residue arginine 130 coordinates NAD(+). L-saccharopine contacts are provided by arginine 131 and phenylalanine 135. NAD(+)-binding positions include 203 to 204, aspartate 227, threonine 231, tyrosine 251, and valine 278; that span reads GR. The cysteines at positions 205 and 249 are disulfide-linked. Residue 279 to 281 coordinates L-saccharopine; that stretch reads SCD. 319–322 contacts NAD(+); it reads IDHL.

This sequence belongs to the AlaDH/PNT family. In terms of assembly, monomer.

The catalysed reaction is L-saccharopine + NAD(+) + H2O = L-lysine + 2-oxoglutarate + NADH + H(+). The protein operates within amino-acid biosynthesis; L-lysine biosynthesis via AAA pathway; L-lysine from L-alpha-aminoadipate (fungal route): step 3/3. Catalyzes the NAD(+)-dependent cleavage of saccharopine to L-lysine and 2-oxoglutarate, the final step in the alpha-aminoadipate (AAA) pathway for lysin biosynthesis. The protein is Saccharopine dehydrogenase [NAD(+), L-lysine-forming] of Schizosaccharomyces pombe (strain 972 / ATCC 24843) (Fission yeast).